We begin with the raw amino-acid sequence, 1378 residues long: MASGWDERPPWRLESLRLLPPPPLLLLLLLLRSSAQAAHIKKAEATTTTVGGSEAAEGQFDHYYHEAALGEALEAAAAAGPPGLARLFSIGNSVEGRPLWVLRLTAGLGPPPTPAAVGLDAAGPLLPGRPQVKLVGNMHGDETVSRQVLVYLARELASGYRRGDPRLVRLLNTTDVYLLPSLNPDGFERAREGDCGLGDSGPPGTSGRDNSRGRDLNRSFPDQFSTGEPPSLDEVPEVRALIDWIRRNKFVLSGNLHGGSVVASYPFDDSPEHKTTGIYSKTSDDEVFRYLAKAYASNHPIMRTGEPHCPGDEEETFKDGITNGAHWYDVEGGMQDYNYVWANCFEITLELSCCKYPPASQLRQEWENNRESLITLIEKVHIGIKGFVKDSVTGSGLENATISVAGINHNITTGRFGDFHRLLIPGSYNLTAVSPGYMPLTINNIVVKEGPATEIDFSLQPTVMSVVPDSTEAVTTPGTVAVPNIPPGTPSSHQPIQPKDFHHHHFPDMEIFLRRFANEYPNITRLYSLGKSVESRELYVMEISDNPGVHEPGEPEFKYIGNMHGNEVVGRELLLNLIEYLCKNFGTDPEVTDLVRSTRIHLMPSMNPDGYEKSQEGDSISVVGRNNSNNFDLNRNFPDQFVPITDPTQPETIAVMSWVKAYPFVLSANLHGGSLVVNYPYDDNEQGVATYSKSPDDAVFQQIALSYSKENSQMFQGRPCKDMYLNEYFPHGITNGASWYNVPGGMQDWNYLQTNCFEVTIELGCVKYPFEKELPKYWEQNRRSLIQFMKQVHQGVKGFVLDATDGRGILNATLSVAEINHPVTTYKAGDYWRLLVPGTYKITASARGYNPVTKNVTVRSEGAIQVNFTLVRSSTDANNESKKGKGHSTSTDDTSDPTSKEFEALIKHLSAENGLEGFMLSSSSDLALYRYHSYKDLSEFLRGLVMNYPHITNLTTLGQSVEYRHIWSLEISNKPNISEPEEPKIRFVAGIHGNAPVGTELLLALAEFLCLNYKKNPVVTQLVDRTRIVIVPSLNPDGRERAQEKDCTSKTGHTNARGRDLDTDFTSNASQPETKAIIENLIQKQDFSLSIALDGGSVLVTYPYDKPVQTVENKETLKHLASLYANNHPSMHMGQPSCPNNSDENIPGGVMRGAEWHSHLGSMKDYSVTYGHCPEITVYTSCCYFPSAAQLPALWAENKKSLLSMLVEVHKGVHGLVKDKTGKPISKAVIVLNEGIRVHTKEGGYFHVLLAPGVHNINAIADGYQQQHSQVFVHHDAASSVVIVFDTDNRIFGLPRELVVTVSGATMSALILTACIIWCICSIKSNRHKDGFHRLRQHHDEYEDEIRMMSTGSKKSLLSHEFQDETDTEEETLYSSKH.

The signal sequence occupies residues 1 to 37 (MASGWDERPPWRLESLRLLPPPPLLLLLLLLRSSAQA). Over 38-1297 (AHIKKAEATT…DNRIFGLPRE (1260 aa)) the chain is Extracellular. In terms of domain architecture, Peptidase M14 1 spans 62–380 (HYYHEAALGE…ESLITLIEKV (319 aa)). Zn(2+) contacts are provided by histidine 139 and glutamate 142. The Cell attachment site signature appears at 162–164 (RGD). Asparagine 172 and asparagine 217 each carry an N-linked (GlcNAc...) asparagine glycan. The disordered stretch occupies residues 189–232 (RAREGDCGLGDSGPPGTSGRDNSRGRDLNRSFPDQFSTGEPPSL). Histidine 257 contributes to the Zn(2+) binding site. Tyrosine 265 bears the Phosphotyrosine mark. Serine 270 is subject to Phosphoserine. Glutamate 350 acts as the Proton donor/acceptor in catalysis. N-linked (GlcNAc...) asparagine glycans are attached at residues asparagine 399, asparagine 410, asparagine 429, and asparagine 522. The region spanning 502–792 (HHHHFPDMEI…RSLIQFMKQV (291 aa)) is the Peptidase M14 2 domain. 2 residues coordinate Zn(2+): histidine 564 and glutamate 567. N-linked (GlcNAc...) asparagine glycosylation occurs at asparagine 626. Zn(2+) is bound at residue histidine 671. Residue glutamate 762 is the Proton donor/acceptor of the active site. 6 N-linked (GlcNAc...) asparagine glycosylation sites follow: asparagine 811, asparagine 855, asparagine 867, asparagine 879, asparagine 953, and asparagine 976. Positions 875–898 (TDANNESKKGKGHSTSTDDTSDPT) are disordered. The 280-residue stretch at 930 to 1209 (RYHSYKDLSE…KSLLSMLVEV (280 aa)) folds into the Peptidase M14 3 domain. Positions 1039 to 1048 (RERAQEKDCT) are enriched in basic and acidic residues. The segment at 1039-1068 (RERAQEKDCTSKTGHTNARGRDLDTDFTSN) is disordered. N-linked (GlcNAc...) asparagine glycosylation is found at asparagine 1068 and asparagine 1140. Residues 1298 to 1318 (LVVTVSGATMSALILTACIIW) traverse the membrane as a helical segment. 3 S-palmitoyl cysteine lipidation sites follow: cysteine 1315, cysteine 1319, and cysteine 1321. Residues 1319–1378 (CICSIKSNRHKDGFHRLRQHHDEYEDEIRMMSTGSKKSLLSHEFQDETDTEEETLYSSKH) lie on the Cytoplasmic side of the membrane. Serine 1356 and serine 1359 each carry phosphoserine. Residues 1357 to 1378 (LLSHEFQDETDTEEETLYSSKH) are disordered. 2 positions are modified to phosphothreonine: threonine 1366 and threonine 1368.

The protein belongs to the peptidase M14 family. Requires Zn(2+) as cofactor. As to expression, isoform 1 is widely expressed with highest levels in the hippocampus, spinal cord, atrium, colon, testis and ovaries. Detected in the liver of females but not males. Isoform 2 is not detected in brain or lung.

It is found in the cell membrane. It localises to the nucleus. The catalysed reaction is Releases C-terminal Arg and Lys from polypeptides.. This Rattus norvegicus (Rat) protein is Carboxypeptidase D.